The chain runs to 204 residues: FMN-dependent NADH:quinone oxidoreductase 1 (204 aa).

Residues Ser14, 20-22 (SMS), and 99-102 (MYNF) contribute to the FMN site.

Belongs to the azoreductase type 1 family. In terms of assembly, homodimer. FMN is required as a cofactor.

It carries out the reaction 2 a quinone + NADH + H(+) = 2 a 1,4-benzosemiquinone + NAD(+). It catalyses the reaction N,N-dimethyl-1,4-phenylenediamine + anthranilate + 2 NAD(+) = 2-(4-dimethylaminophenyl)diazenylbenzoate + 2 NADH + 2 H(+). Quinone reductase that provides resistance to thiol-specific stress caused by electrophilic quinones. In terms of biological role, also exhibits azoreductase activity. Catalyzes the reductive cleavage of the azo bond in aromatic azo compounds to the corresponding amines. The chain is FMN-dependent NADH:quinone oxidoreductase 1 from Hahella chejuensis (strain KCTC 2396).